Consider the following 910-residue polypeptide: Protein translocase subunit SecA (910 aa).

ATP contacts are provided by residues glutamine 87, 105–109 (GEGKT), and aspartate 508. Basic and acidic residues predominate over residues 558–568 (RHESRRIDNQL). 2 disordered regions span residues 558-580 (RHESRRIDNQLRGRSGRQGDPGS) and 873-910 (AAQQGIAQVQRDEPKIGRNDPCPCGSGKKYKHCHGQLS). Residues cysteine 894, cysteine 896, cysteine 905, and histidine 906 each coordinate Zn(2+). The span at 900 to 910 (KKYKHCHGQLS) shows a compositional bias: basic residues.

Belongs to the SecA family. Monomer and homodimer. Part of the essential Sec protein translocation apparatus which comprises SecA, SecYEG and auxiliary proteins SecDF-YajC and YidC. It depends on Zn(2+) as a cofactor.

It localises to the cell inner membrane. The protein resides in the cytoplasm. The catalysed reaction is ATP + H2O + cellular proteinSide 1 = ADP + phosphate + cellular proteinSide 2.. In terms of biological role, part of the Sec protein translocase complex. Interacts with the SecYEG preprotein conducting channel. Has a central role in coupling the hydrolysis of ATP to the transfer of proteins into and across the cell membrane, serving both as a receptor for the preprotein-SecB complex and as an ATP-driven molecular motor driving the stepwise translocation of polypeptide chains across the membrane. The polypeptide is Protein translocase subunit SecA (Stenotrophomonas maltophilia (strain R551-3)).